We begin with the raw amino-acid sequence, 252 residues long: Imidazole glycerol phosphate synthase subunit HisF (252 aa).

Residues aspartate 11 and aspartate 130 contribute to the active site.

Belongs to the HisA/HisF family. As to quaternary structure, heterodimer of HisH and HisF.

Its subcellular location is the cytoplasm. The enzyme catalyses 5-[(5-phospho-1-deoxy-D-ribulos-1-ylimino)methylamino]-1-(5-phospho-beta-D-ribosyl)imidazole-4-carboxamide + L-glutamine = D-erythro-1-(imidazol-4-yl)glycerol 3-phosphate + 5-amino-1-(5-phospho-beta-D-ribosyl)imidazole-4-carboxamide + L-glutamate + H(+). It participates in amino-acid biosynthesis; L-histidine biosynthesis; L-histidine from 5-phospho-alpha-D-ribose 1-diphosphate: step 5/9. Its function is as follows. IGPS catalyzes the conversion of PRFAR and glutamine to IGP, AICAR and glutamate. The HisF subunit catalyzes the cyclization activity that produces IGP and AICAR from PRFAR using the ammonia provided by the HisH subunit. The protein is Imidazole glycerol phosphate synthase subunit HisF of Anoxybacillus flavithermus (strain DSM 21510 / WK1).